The following is a 484-amino-acid chain: Phosphoenolpyruvate carboxylase (484 aa).

The protein belongs to the PEPCase type 2 family. Homotetramer. Mg(2+) serves as cofactor.

The enzyme catalyses oxaloacetate + phosphate = phosphoenolpyruvate + hydrogencarbonate. Functionally, catalyzes the irreversible beta-carboxylation of phosphoenolpyruvate (PEP) to form oxaloacetate (OAA), a four-carbon dicarboxylic acid source for the tricarboxylic acid cycle. This is Phosphoenolpyruvate carboxylase from Methanospirillum hungatei JF-1 (strain ATCC 27890 / DSM 864 / NBRC 100397 / JF-1).